The following is a 101-amino-acid chain: MKPNFSKGLLPAVVIEEGTKEVLMLAYMNEEAYEKTLETKRTWFYSRSRRSLWNKGETSGNVQHVQSLYLDCDQDAIVVVVKQVGPACHTGEKTCFHYKII.

Asp-71 is a Mg(2+) binding site. Cys-72 provides a ligand contact to Zn(2+). 2 residues coordinate Mg(2+): Asp-73 and Asp-75. 2 residues coordinate Zn(2+): Cys-88 and Cys-95.

It belongs to the PRA-CH family. In terms of assembly, homodimer. It depends on Mg(2+) as a cofactor. Requires Zn(2+) as cofactor.

The protein resides in the cytoplasm. It catalyses the reaction 1-(5-phospho-beta-D-ribosyl)-5'-AMP + H2O = 1-(5-phospho-beta-D-ribosyl)-5-[(5-phospho-beta-D-ribosylamino)methylideneamino]imidazole-4-carboxamide. It participates in amino-acid biosynthesis; L-histidine biosynthesis; L-histidine from 5-phospho-alpha-D-ribose 1-diphosphate: step 3/9. Functionally, catalyzes the hydrolysis of the adenine ring of phosphoribosyl-AMP. The protein is Phosphoribosyl-AMP cyclohydrolase of Bacillus cereus (strain Q1).